Consider the following 444-residue polypeptide: ATP-dependent protease ATPase subunit HslU (444 aa).

ATP is bound by residues isoleucine 18 and 60–65 (GVGKTE). The interval 143–163 (WGEVENHDSHSSTRQAFRKKL) is disordered. Aspartate 257, glutamate 322, and arginine 394 together coordinate ATP.

It belongs to the ClpX chaperone family. HslU subfamily. A double ring-shaped homohexamer of HslV is capped on each side by a ring-shaped HslU homohexamer. The assembly of the HslU/HslV complex is dependent on binding of ATP.

It is found in the cytoplasm. Its function is as follows. ATPase subunit of a proteasome-like degradation complex; this subunit has chaperone activity. The binding of ATP and its subsequent hydrolysis by HslU are essential for unfolding of protein substrates subsequently hydrolyzed by HslV. HslU recognizes the N-terminal part of its protein substrates and unfolds these before they are guided to HslV for hydrolysis. This Haemophilus influenzae (strain 86-028NP) protein is ATP-dependent protease ATPase subunit HslU.